Consider the following 255-residue polypeptide: MLTVIPIPAFQDNYIWLLRQDASDKVVIVDPGDAQPVIEYLEREGLSLAAILVTHHHHDHTGGIDALVKRYSPRVIGPDNSAIPAIDEVVGDEDECRVQGRRFEVFAVPGHTLDHIAFYAPGTPGLLFCGDTLFSGGCGRLFEGTAEQMHRSLARLAALPDDTLVFAGHEYTLANLRFAQAAEPDNPARDAHLGECERARQLERPTLPSTIGRERQINPFLRIDQPGLLNALAEQGSVDDDSAAFATLRGWKDRF.

Residues His-55, His-57, Asp-59, His-60, His-111, Asp-131, and His-169 each contribute to the Zn(2+) site.

This sequence belongs to the metallo-beta-lactamase superfamily. Glyoxalase II family. In terms of assembly, monomer. The cofactor is Zn(2+).

The enzyme catalyses an S-(2-hydroxyacyl)glutathione + H2O = a 2-hydroxy carboxylate + glutathione + H(+). The protein operates within secondary metabolite metabolism; methylglyoxal degradation; (R)-lactate from methylglyoxal: step 2/2. Functionally, thiolesterase that catalyzes the hydrolysis of S-D-lactoyl-glutathione to form glutathione and D-lactic acid. This Chromohalobacter salexigens (strain ATCC BAA-138 / DSM 3043 / CIP 106854 / NCIMB 13768 / 1H11) protein is Hydroxyacylglutathione hydrolase.